Consider the following 876-residue polypeptide: Alanine--tRNA ligase (876 aa).

Lys-74 is subject to N6-acetyllysine. Zn(2+) contacts are provided by His-564, His-568, Cys-666, and His-670.

It belongs to the class-II aminoacyl-tRNA synthetase family. Homotetramer. It depends on Zn(2+) as a cofactor.

It localises to the cytoplasm. The enzyme catalyses tRNA(Ala) + L-alanine + ATP = L-alanyl-tRNA(Ala) + AMP + diphosphate. Its function is as follows. Catalyzes the attachment of alanine to tRNA(Ala) in a two-step reaction: alanine is first activated by ATP to form Ala-AMP and then transferred to the acceptor end of tRNA(Ala). Also edits incorrectly charged Ser-tRNA(Ala) and Gly-tRNA(Ala) via its editing domain. This Escherichia coli O9:H4 (strain HS) protein is Alanine--tRNA ligase.